The sequence spans 692 residues: Protein artemis (692 aa).

T380 carries the phosphothreonine modification. Phosphoserine is present on S385. 2 disordered regions span residues 504 to 555 (LENF…DSQS) and 640 to 664 (STNA…LPKR). Residues 506-520 (NFPSSTVAGGSQSPK) are compositionally biased toward polar residues. Over residues 530–543 (THISSQNSSQSTHI) the composition is skewed to low complexity. 2 stretches are compositionally biased toward polar residues: residues 544-555 (TEQGSQGWDSQS) and 640-650 (STNADSQSSSD). The residue at position 645 (S645) is a Phosphoserine; by ATM.

The protein belongs to the DNA repair metallo-beta-lactamase (DRMBL) family. As to quaternary structure, interacts with LIG4; the interaction is direct. Interacts with ATM. Interacts with BRCA1. Interacts with PRKDC. Interacts with TP53BP1. Also exhibits ATM- and phosphorylation-dependent interaction with the MRN complex, composed of MRE11, RAD50, and NBN. Post-translationally, phosphorylation on undefined residues by PRKDC may stimulate endonucleolytic activity on 5' and 3' hairpins and overhangs. PRKDC must remain present, even after phosphorylation, for efficient hairpin opening. Also phosphorylated by ATM in response to ionizing radiation (IR) and by ATR in response to ultraviolet (UV) radiation. Ubiquitously expressed, with highest levels in the kidney, lung, pancreas and placenta (at the mRNA level). Expression is not increased in thymus or bone marrow, sites of V(D)J recombination.

Its subcellular location is the nucleus. Functionally, nuclease involved in DNA non-homologous end joining (NHEJ); required for double-strand break repair and V(D)J recombination. Required for V(D)J recombination, the process by which exons encoding the antigen-binding domains of immunoglobulins and T-cell receptor proteins are assembled from individual V, (D), and J gene segments. V(D)J recombination is initiated by the lymphoid specific RAG endonuclease complex, which generates site specific DNA double strand breaks (DSBs). These DSBs present two types of DNA end structures: hairpin sealed coding ends and phosphorylated blunt signal ends. These ends are independently repaired by the non homologous end joining (NHEJ) pathway to form coding and signal joints respectively. This protein exhibits single-strand specific 5'-3' exonuclease activity in isolation and acquires endonucleolytic activity on 5' and 3' hairpins and overhangs when in a complex with PRKDC. The latter activity is required specifically for the resolution of closed hairpins prior to the formation of the coding joint. Also required for the repair of complex DSBs induced by ionizing radiation, which require substantial end-processing prior to religation by NHEJ. The polypeptide is Protein artemis (Homo sapiens (Human)).